The primary structure comprises 394 residues: 1-deoxy-D-xylulose 5-phosphate reductoisomerase (394 aa).

NADPH contacts are provided by threonine 13, glycine 14, serine 15, valine 16, arginine 40, glutamine 41, and asparagine 127. Lysine 128 is a 1-deoxy-D-xylulose 5-phosphate binding site. Glutamate 129 provides a ligand contact to NADPH. Residue aspartate 153 coordinates Mn(2+). 1-deoxy-D-xylulose 5-phosphate contacts are provided by serine 154, glutamate 155, serine 184, and histidine 207. Glutamate 155 is a binding site for Mn(2+). Glycine 213 lines the NADPH pocket. 1-deoxy-D-xylulose 5-phosphate is bound by residues serine 220, asparagine 225, lysine 226, and glutamate 229. Residue glutamate 229 coordinates Mn(2+).

It belongs to the DXR family. Mg(2+) is required as a cofactor. Mn(2+) serves as cofactor.

The catalysed reaction is 2-C-methyl-D-erythritol 4-phosphate + NADP(+) = 1-deoxy-D-xylulose 5-phosphate + NADPH + H(+). It participates in isoprenoid biosynthesis; isopentenyl diphosphate biosynthesis via DXP pathway; isopentenyl diphosphate from 1-deoxy-D-xylulose 5-phosphate: step 1/6. Catalyzes the NADPH-dependent rearrangement and reduction of 1-deoxy-D-xylulose-5-phosphate (DXP) to 2-C-methyl-D-erythritol 4-phosphate (MEP). The protein is 1-deoxy-D-xylulose 5-phosphate reductoisomerase of Chromobacterium violaceum (strain ATCC 12472 / DSM 30191 / JCM 1249 / CCUG 213 / NBRC 12614 / NCIMB 9131 / NCTC 9757 / MK).